The primary structure comprises 321 residues: Opticin (321 aa).

Residues 1-19 (MKLLALLSLLILMLQEART) form the signal peptide. Residue Tyr61 is modified to Sulfotyrosine. One can recognise an LRRNT domain in the interval 105–142 (LLAAPANHGLPTCLICVCLGSSVYCDDADLENIPPLPQ). LRR repeat units lie at residues 143–164 (TTAY…DFKG), 167–188 (KLKR…ALRL), 191–212 (ALRD…PTSI), 237–258 (KLQF…LPLS), 259–279 (LRSL…AFCD), and 289–309 (PLED…PSAY). A disulfide bridge connects residues Cys278 and Cys311. Asn301 carries N-linked (GlcNAc...) asparagine glycosylation.

This sequence belongs to the small leucine-rich proteoglycan (SLRP) family. SLRP class III subfamily. In terms of assembly, homodimer. O-glycosylated (sialylated oligosaccharides). In terms of processing, sulfated on tyrosine residues. Post-translationally, proteolytically cleaved by MMP1, MMP2, MMP3, MMP7, MMP8, MMP9, ADAMTS4, and ADAMTS5. Proteolytically cleaved by MMP13.

The protein localises to the secreted. It localises to the extracellular space. It is found in the extracellular matrix. Its function is as follows. Inhibits angiogenesis in the vitreous humor of the eye, and therefore represses neovascularization. Binds collagen fibrils. May be involved in collagen fiber organization via regulation of other members of the small leucine-rich repeat proteoglycan superfamily. This chain is Opticin (OPTC), found in Bos taurus (Bovine).